The chain runs to 266 residues: Tryptophan synthase alpha chain (266 aa).

Residues E50 and D61 each act as proton acceptor in the active site.

It belongs to the TrpA family. Tetramer of two alpha and two beta chains.

The enzyme catalyses (1S,2R)-1-C-(indol-3-yl)glycerol 3-phosphate + L-serine = D-glyceraldehyde 3-phosphate + L-tryptophan + H2O. Its pathway is amino-acid biosynthesis; L-tryptophan biosynthesis; L-tryptophan from chorismate: step 5/5. The alpha subunit is responsible for the aldol cleavage of indoleglycerol phosphate to indole and glyceraldehyde 3-phosphate. The sequence is that of Tryptophan synthase alpha chain from Alkaliphilus metalliredigens (strain QYMF).